Here is a 570-residue protein sequence, read N- to C-terminus: Proline--tRNA ligase (570 aa).

It belongs to the class-II aminoacyl-tRNA synthetase family. ProS type 1 subfamily. As to quaternary structure, homodimer.

The protein localises to the cytoplasm. It carries out the reaction tRNA(Pro) + L-proline + ATP = L-prolyl-tRNA(Pro) + AMP + diphosphate. Catalyzes the attachment of proline to tRNA(Pro) in a two-step reaction: proline is first activated by ATP to form Pro-AMP and then transferred to the acceptor end of tRNA(Pro). As ProRS can inadvertently accommodate and process non-cognate amino acids such as alanine and cysteine, to avoid such errors it has two additional distinct editing activities against alanine. One activity is designated as 'pretransfer' editing and involves the tRNA(Pro)-independent hydrolysis of activated Ala-AMP. The other activity is designated 'posttransfer' editing and involves deacylation of mischarged Ala-tRNA(Pro). The misacylated Cys-tRNA(Pro) is not edited by ProRS. This is Proline--tRNA ligase from Wolinella succinogenes (strain ATCC 29543 / DSM 1740 / CCUG 13145 / JCM 31913 / LMG 7466 / NCTC 11488 / FDC 602W) (Vibrio succinogenes).